A 551-amino-acid chain; its full sequence is Cation/acetate symporter ActP (551 aa).

The next 14 helical transmembrane spans lie at A8 to V28, W35 to A55, G78 to V98, G105 to E125, L151 to A171, V185 to A205, W208 to V228, I264 to L284, G305 to V325, L357 to L377, V406 to E426, I430 to L450, V465 to W485, and F496 to F516.

The protein belongs to the sodium:solute symporter (SSF) (TC 2.A.21) family.

The protein localises to the cell inner membrane. In terms of biological role, transports acetate. This Klebsiella pneumoniae (strain 342) protein is Cation/acetate symporter ActP.